A 94-amino-acid polypeptide reads, in one-letter code: Integration host factor subunit beta (94 aa).

Belongs to the bacterial histone-like protein family. In terms of assembly, heterodimer of an alpha and a beta chain.

Functionally, this protein is one of the two subunits of integration host factor, a specific DNA-binding protein that functions in genetic recombination as well as in transcriptional and translational control. The chain is Integration host factor subunit beta from Mesorhizobium japonicum (strain LMG 29417 / CECT 9101 / MAFF 303099) (Mesorhizobium loti (strain MAFF 303099)).